The primary structure comprises 534 residues: Light-independent protochlorophyllide reductase subunit B (534 aa).

D36 is a binding site for [4Fe-4S] cluster. The active-site Proton donor is D274. 409 to 410 is a binding site for substrate; sequence GL. Residues 426 to 446 are disordered; it reads DEAGPSHHGGKAVPASAPRAD.

Belongs to the ChlB/BchB/BchZ family. In terms of assembly, protochlorophyllide reductase is composed of three subunits; BchL, BchN and BchB. Forms a heterotetramer of two BchB and two BchN subunits. [4Fe-4S] cluster is required as a cofactor.

It catalyses the reaction chlorophyllide a + oxidized 2[4Fe-4S]-[ferredoxin] + 2 ADP + 2 phosphate = protochlorophyllide a + reduced 2[4Fe-4S]-[ferredoxin] + 2 ATP + 2 H2O. It functions in the pathway porphyrin-containing compound metabolism; bacteriochlorophyll biosynthesis (light-independent). Its function is as follows. Component of the dark-operative protochlorophyllide reductase (DPOR) that uses Mg-ATP and reduced ferredoxin to reduce ring D of protochlorophyllide (Pchlide) to form chlorophyllide a (Chlide). This reaction is light-independent. The NB-protein (BchN-BchB) is the catalytic component of the complex. The protein is Light-independent protochlorophyllide reductase subunit B of Cereibacter sphaeroides (strain ATCC 17029 / ATH 2.4.9) (Rhodobacter sphaeroides).